The primary structure comprises 95 residues: Aspartyl/glutamyl-tRNA(Asn/Gln) amidotransferase subunit C (95 aa).

It belongs to the GatC family. As to quaternary structure, heterotrimer of A, B and C subunits.

It catalyses the reaction L-glutamyl-tRNA(Gln) + L-glutamine + ATP + H2O = L-glutaminyl-tRNA(Gln) + L-glutamate + ADP + phosphate + H(+). The catalysed reaction is L-aspartyl-tRNA(Asn) + L-glutamine + ATP + H2O = L-asparaginyl-tRNA(Asn) + L-glutamate + ADP + phosphate + 2 H(+). In terms of biological role, allows the formation of correctly charged Asn-tRNA(Asn) or Gln-tRNA(Gln) through the transamidation of misacylated Asp-tRNA(Asn) or Glu-tRNA(Gln) in organisms which lack either or both of asparaginyl-tRNA or glutaminyl-tRNA synthetases. The reaction takes place in the presence of glutamine and ATP through an activated phospho-Asp-tRNA(Asn) or phospho-Glu-tRNA(Gln). This chain is Aspartyl/glutamyl-tRNA(Asn/Gln) amidotransferase subunit C, found in Methylorubrum populi (strain ATCC BAA-705 / NCIMB 13946 / BJ001) (Methylobacterium populi).